A 117-amino-acid chain; its full sequence is Big defensin (117 aa).

A signal peptide spans 1 to 23 (MKGNIGIAVFYMLLLLLPTDSIG). Positions 26-36 (MEEEQEKLFRQ) are excised as a propeptide. Disulfide bonds link C83–C113, C90–C108, and C94–C114.

Belongs to the big defensin family. As to quaternary structure, interacts with intracellular coagulation inhibitor 1/LICI-1. In terms of tissue distribution, expressed in all tissues examined, including hemocytes, heart, hepatopancreas, stomach, intestine and skeletal muscle.

Its subcellular location is the secreted. Functionally, significantly inhibits the growth of Gram-negative and Gram-positive bacteria and fungi in vitro. The chain is Big defensin from Tachypleus tridentatus (Japanese horseshoe crab).